A 1091-amino-acid polypeptide reads, in one-letter code: Leucine--tRNA ligase, cytoplasmic (1091 aa).

The short motif at 53–63 is the 'HIGH' region element; that stretch reads PYMNGYLHIGH. The 'KMSKS' region signature appears at 715 to 719; that stretch reads KMSKS. K718 contributes to the ATP binding site.

The protein belongs to the class-I aminoacyl-tRNA synthetase family.

It is found in the cytoplasm. Its subcellular location is the cytosol. The catalysed reaction is tRNA(Leu) + L-leucine + ATP = L-leucyl-tRNA(Leu) + AMP + diphosphate. In terms of biological role, catalyzes the specific attachment of an amino acid to its cognate tRNA in a two step reaction: the amino acid (AA) is first activated by ATP to form AA-AMP and then transferred to the acceptor end of the tRNA. This Arabidopsis thaliana (Mouse-ear cress) protein is Leucine--tRNA ligase, cytoplasmic.